The chain runs to 637 residues: Glutamate--cysteine ligase catalytic subunit (637 aa).

Met-1 carries the post-translational modification N-acetylmethionine. Ser-5 and Ser-8 each carry phosphoserine.

Belongs to the glutamate--cysteine ligase type 3 family. As to quaternary structure, heterodimer of a catalytic heavy chain and a regulatory light chain. In terms of tissue distribution, most abundant in kidney. Also found in liver and testis.

It carries out the reaction L-cysteine + L-glutamate + ATP = gamma-L-glutamyl-L-cysteine + ADP + phosphate + H(+). It catalyses the reaction (2S)-2-aminobutanoate + L-glutamate + ATP = gamma-L-glutamyl-(2S)-2-aminobutanoate + ADP + phosphate + H(+). It participates in sulfur metabolism; glutathione biosynthesis; glutathione from L-cysteine and L-glutamate: step 1/2. With respect to regulation, feedback inhibition by glutathione. Functionally, catalyzes the ATP-dependent ligation of L-glutamate and L-cysteine and participates in the first and rate-limiting step in glutathione biosynthesis. The sequence is that of Glutamate--cysteine ligase catalytic subunit from Rattus norvegicus (Rat).